A 459-amino-acid polypeptide reads, in one-letter code: Ceramide glucosyltransferase 3 (459 aa).

A helical membrane pass occupies residues 77 to 97 (LIAIVGFVFVFCLYLIHIIAL). Aspartate 156 is a short sequence motif (D1). A short sequence motif (D2) is located at residue aspartate 208. A short sequence motif (D3) is located at residue aspartate 302. The active-site Proton acceptor is aspartate 302. A (Q/R)XXRW motif is present at residues 338-342 (RICRW). Helical transmembrane passes span 367 to 387 (LIMA…ILIL) and 415 to 435 (FMLI…KALL).

It belongs to the glycosyltransferase 2 family. Expressed in pharyngeal intestinal valve, intestinal rectal valve and hypodermis.

Its subcellular location is the membrane. The catalysed reaction is an N-acylsphing-4-enine + UDP-alpha-D-glucose = a beta-D-glucosyl-(1&lt;-&gt;1')-N-acylsphing-4-enine + UDP + H(+). It carries out the reaction an N-acyl-15-methylhexadecasphing-4-enine + UDP-alpha-D-glucose = an N-acyl-1-beta-D-glucosyl-15-methylhexadecasphing-4-enine + UDP + H(+). It participates in lipid metabolism; sphingolipid metabolism. Catalyzes the first glycosylation step in glycosphingolipid biosynthesis, the transfer of glucose to ceramide to produce glucosylceramides (GlcCer). GlcCer are known to contribute to the physical properties and physiological functions of membranes and may regulate signal transduction. Seems to be the major active form in the nematode. Only branched-chain sphingoid bases like 15-methylhexadecasphing-4-enine are used for generating complex sphingolipids in Caenorhabditis elegans. Together with cgt-1, plays a role in the trafficking of proteins such as mig-14 to the cell membrane in intestinal cells. The protein is Ceramide glucosyltransferase 3 of Caenorhabditis elegans.